The primary structure comprises 199 residues: Large ribosomal subunit protein eL13B (199 aa).

A phosphothreonine mark is found at Thr144 and Thr152.

The protein belongs to the eukaryotic ribosomal protein eL13 family. In terms of assembly, component of the large ribosomal subunit (LSU). Mature yeast ribosomes consist of a small (40S) and a large (60S) subunit. The 40S small subunit contains 1 molecule of ribosomal RNA (18S rRNA) and 33 different proteins (encoded by 57 genes). The large 60S subunit contains 3 rRNA molecules (25S, 5.8S and 5S rRNA) and 46 different proteins (encoded by 81 genes).

It is found in the cytoplasm. Functionally, component of the ribosome, a large ribonucleoprotein complex responsible for the synthesis of proteins in the cell. The small ribosomal subunit (SSU) binds messenger RNAs (mRNAs) and translates the encoded message by selecting cognate aminoacyl-transfer RNA (tRNA) molecules. The large subunit (LSU) contains the ribosomal catalytic site termed the peptidyl transferase center (PTC), which catalyzes the formation of peptide bonds, thereby polymerizing the amino acids delivered by tRNAs into a polypeptide chain. The nascent polypeptides leave the ribosome through a tunnel in the LSU and interact with protein factors that function in enzymatic processing, targeting, and the membrane insertion of nascent chains at the exit of the ribosomal tunnel. The polypeptide is Large ribosomal subunit protein eL13B (Saccharomyces cerevisiae (strain ATCC 204508 / S288c) (Baker's yeast)).